The sequence spans 813 residues: Striatin-interacting protein 1 homolog (813 aa).

Disordered stretches follow at residues 1–41 (MDGV…SEAP) and 307–379 (RAAS…RDEV). Over residues 9–18 (NNKQKQNQML) the composition is skewed to polar residues. A compositionally biased stretch (basic and acidic residues) spans 22–35 (MRGEFTRNQRKDSE). Positions 307–316 (RAASPPASAS) are enriched in low complexity. Phosphoserine is present on Ser-310. The span at 331 to 352 (KALIKQDNLDTFNEKDPYKADD) shows a compositional bias: basic and acidic residues. Residues 353 to 367 (SHEDEEENDDNDNSL) show a composition bias toward acidic residues.

This sequence belongs to the STRIP family. In terms of assembly, part of the core of STRIPAK complexes composed of PP2A catalytic and scaffolding subunits, the striatins (PP2A regulatory subunits), the striatin-associated proteins MOB4, STRIP1 and STRIP2, PDCD10 and members of the STE20 kinases, such as STK24 and STK26.

The protein resides in the cytoplasm. Plays a role in the regulation of cell morphology and cytoskeletal organization. Required in the cortical actin filament dynamics and cell shape. Part of the striatin-interacting phosphatase and kinase (STRIPAK) complexes. STRIPAK complexes have critical roles in protein (de)phosphorylation and are regulators of multiple signaling pathways including Hippo, MAPK, nuclear receptor and cytoskeleton remodeling. Different types of STRIPAK complexes are involved in a variety of biological processes such as cell growth, differentiation, apoptosis, metabolism and immune regulation. The protein is Striatin-interacting protein 1 homolog (strip1) of Danio rerio (Zebrafish).